The chain runs to 999 residues: MGPAPLPLLLGLFLPALWRRAITEAREEAKPYPLFPGPFPGSLQTDHTPLLSLPHASGYQPALMFSPTQPGRPHTGNVAIPQVTSVESKPLPPLAFKHTVGHIILSEHKGVKFNCSISVPNIYQDTTISWWKDGKELLGAHHAITQFYPDDEVTAIIASFSITSVQRSDNGSYICKMKINNEEIVSDPIYIEVQGLPHFTKQPESMNVTRNTAFNLTCQAVGPPEPVNIFWVQNSSRVNEQPEKSPSVLTVPGLTEMAVFSCEAHNDKGLTVSKGVQINIKAIPSPPTEVSIRNSTAHSILISWVPGFDGYSPFRNCSIQVKEADPLSNGSVMIFNTSALPHLYQIKQLQALANYSIGVSCMNEIGWSAVSPWILASTTEGAPSVAPLNVTVFLNESSDNVDIRWMKPPTKQQDGELVGYRISHVWQSAGISKELLEEVGQNGSRARISVQVHNATCTVRIAAVTRGGVGPFSDPVKIFIPAHGWVDYAPSSTPAPGNADPVLIIFGCFCGFILIGLILYISLAIRKRVQETKFGNAFTEEDSELVVNYIAKKSFCRRAIELTLHSLGVSEELQNKLEDVVIDRNLLILGKILGEGEFGSVMEGNLKQEDGTSLKVAVKTMKLDNSSQREIEEFLSEAACMKDFSHPNVIRLLGVCIEMSSQGIPKPMVILPFMKYGDLHTYLLYSRLETGPKHIPLQTLLKFMVDIALGMEYLSNRNFLHRDLAARNCMLRDDMTVCVADFGLSKKIYSGDYYRQGRIAKMPVKWIAIESLADRVYTSKSDVWAFGVTMWEIATRGMTPYPGVQNHEMYDYLLHGHRLKQPEDCLDELYEIMYSCWRTDPLDRPTFSVLRLQLEKLLESLPDVRNQADVIYVNTQLLESSEGLAQGSTLAPLDLNIDPDSIIASCTPRAAISVVTAEVHDSKPHEGRYILNGGSEEWEDLTSAPSAAVTAEKNSVLPGERLVRNGVSWSHSSMLPLGSSLPDELLFADDSSEGSEVLM.

The signal sequence occupies residues 1 to 20; the sequence is MGPAPLPLLLGLFLPALWRR. The Extracellular segment spans residues 21–505; the sequence is AITEAREEAK…PGNADPVLII (485 aa). 2 Ig-like C2-type domains span residues 81–186 and 197–273; these read PQVT…EIVS and PHFT…LTVS. N-linked (GlcNAc...) asparagine glycans are attached at residues asparagine 114, asparagine 170, asparagine 207, asparagine 215, asparagine 234, asparagine 294, asparagine 316, asparagine 329, asparagine 336, asparagine 354, asparagine 389, asparagine 395, asparagine 442, and asparagine 454. A disulfide bridge connects residues cysteine 115 and cysteine 175. Cysteine 218 and cysteine 262 form a disulfide bridge. Fibronectin type-III domains are found at residues 286–381 and 386–484; these read PPTE…TTEG and APLN…PAHG. A helical membrane pass occupies residues 506–526; it reads FGCFCGFILIGLILYISLAIR. Topologically, residues 527–999 are cytoplasmic; that stretch reads KRVQETKFGN…DSSEGSEVLM (473 aa). At serine 543 the chain carries Phosphoserine. Positions 587–858 constitute a Protein kinase domain; the sequence is LILGKILGEG…VLRLQLEKLL (272 aa). ATP is bound by residues 593–601 and lysine 615; that span reads LGEGEFGSV. The Proton acceptor role is filled by aspartate 723. Phosphotyrosine; by autocatalysis occurs at positions 749, 753, 754, and 872. Serine 935 bears the Phosphoserine mark.

It belongs to the protein kinase superfamily. Tyr protein kinase family. AXL/UFO subfamily. Interacts (upon activation) with TNK2; stimulates TNK2 autophosphorylation. Interacts (via N-terminus) with extracellular ligands LGALS3, TUB, TULP1 and GAS6. Interacts with VAV1 in a phosphotyrosine-independent manner. Interacts with TIMD4; this interaction enhances TIMD4-mediated efferocytosis. Autophosphorylated on Tyr-749, Tyr-753 and Tyr-754 in the activation loop allowing full activity. Autophosphorylated on Tyr-872 leading to recruitment of downstream partners of the signaling cascade such as PLCG2. In terms of tissue distribution, not expressed in normal B- and T-lymphocytes but is expressed in numerous neoplastic B- and T-cell lines. Highly expressed in testis, ovary, prostate, lung, and kidney, with lower expression in spleen, small intestine, colon, and liver.

It localises to the cell membrane. The enzyme catalyses L-tyrosyl-[protein] + ATP = O-phospho-L-tyrosyl-[protein] + ADP + H(+). Functionally, receptor tyrosine kinase that transduces signals from the extracellular matrix into the cytoplasm by binding to several ligands including LGALS3, TUB, TULP1 or GAS6. Regulates many physiological processes including cell survival, migration, differentiation, and phagocytosis of apoptotic cells (efferocytosis). Ligand binding at the cell surface induces autophosphorylation of MERTK on its intracellular domain that provides docking sites for downstream signaling molecules. Following activation by ligand, interacts with GRB2 or PLCG2 and induces phosphorylation of MAPK1, MAPK2, FAK/PTK2 or RAC1. MERTK signaling plays a role in various processes such as macrophage clearance of apoptotic cells, platelet aggregation, cytoskeleton reorganization and engulfment. Functions in the retinal pigment epithelium (RPE) as a regulator of rod outer segments fragments phagocytosis. Also plays an important role in inhibition of Toll-like receptors (TLRs)-mediated innate immune response by activating STAT1, which selectively induces production of suppressors of cytokine signaling SOCS1 and SOCS3. In Homo sapiens (Human), this protein is Tyrosine-protein kinase Mer (MERTK).